A 460-amino-acid chain; its full sequence is Adenylosuccinate lyase (460 aa).

Residues 15–16, 88–90, and 120–121 each bind N(6)-(1,2-dicarboxyethyl)-AMP; these read RY, NHD, and TS. His169 (proton donor/acceptor) is an active-site residue. Gln245 lines the N(6)-(1,2-dicarboxyethyl)-AMP pocket. Ser293 (proton donor/acceptor) is an active-site residue. Residues Ser294, 299–301, Asn307, Arg333, and 338–342 each bind N(6)-(1,2-dicarboxyethyl)-AMP; these read KIN and STVLR.

This sequence belongs to the lyase 1 family. Adenylosuccinate lyase subfamily. In terms of assembly, homotetramer. Residues from neighboring subunits contribute catalytic and substrate-binding residues to each active site.

It catalyses the reaction N(6)-(1,2-dicarboxyethyl)-AMP = fumarate + AMP. The enzyme catalyses (2S)-2-[5-amino-1-(5-phospho-beta-D-ribosyl)imidazole-4-carboxamido]succinate = 5-amino-1-(5-phospho-beta-D-ribosyl)imidazole-4-carboxamide + fumarate. Its pathway is purine metabolism; AMP biosynthesis via de novo pathway; AMP from IMP: step 2/2. It functions in the pathway purine metabolism; IMP biosynthesis via de novo pathway; 5-amino-1-(5-phospho-D-ribosyl)imidazole-4-carboxamide from 5-amino-1-(5-phospho-D-ribosyl)imidazole-4-carboxylate: step 2/2. Functionally, catalyzes two reactions in de novo purine nucleotide biosynthesis. Catalyzes the breakdown of 5-aminoimidazole- (N-succinylocarboxamide) ribotide (SAICAR or 2-[5-amino-1-(5-phospho-beta-D-ribosyl)imidazole-4-carboxamido]succinate) to 5-aminoimidazole-4-carboxamide ribotide (AICAR or 5-amino-1-(5-phospho-beta-D-ribosyl)imidazole-4-carboxamide) and fumarate, and of adenylosuccinate (ADS or N(6)-(1,2-dicarboxyethyl)-AMP) to adenosine monophosphate (AMP) and fumarate. The polypeptide is Adenylosuccinate lyase (purB) (Buchnera aphidicola subsp. Baizongia pistaciae (strain Bp)).